The following is a 687-amino-acid chain: MSKIRVYELAKELNVSSKDLITLLMDEFGVEVKNHMSAIEDEEAQLIKELLATKPEYVEGSLEDSKSLVDEYEEILQNELNKAKKKRKKNKREDKDDENEELETEVIEIGETITVKELAEKLNKPSNDVIRTLIFSGVMAAINQEIDFATAEKVCESYGVILEKLEVIEELEAVEVEEDDEENLEKRPPIVTVMGHVDHGKTSLLDAIRKAKVTDTEAGGITQHIGAYTININGEEITFLDTPGHEAFTAMRARGAQVTDVVILVVAADDGIMPQTKEAINHCKAAGVPMVVAINKIDKPGANPDRVKQELTEHGLVVEEWGGDTICEEVSAKSNLNIEKLLEMVLLTAEMLELKANKERKAKGTVIEAKLDKGRGPVATLLVQNGTLHVGDAIIVGSTYGRIRAMFDDTGKKIKSAGPSIPVEVLGLSEVPEAGDRFNQVKDEKTARIMADKRKDKEKSDSLMSGNRVSLEDLYSQIKEGKVKELGIIVKADVQGSVQAINQSLEKLSTDDVKVRVIHGGVGAITETDITLATASNAIVIGFNVRPDNNAVAQADKENVEIKTYRIIYDAIEDVKSAMIGMLEPEYKEVILGSAEVRETYKISNVGTIAGCYVLNGKLQRNAETRVIRDGIVIFESSLSSLKRFKDDVKEVNTGYECGLTVEKFNDVKEGDILECFMMEAIKRKEL.

Residues 186–355 (KRPPIVTVMG…LLTAEMLELK (170 aa)) form the tr-type G domain. Residues 195 to 202 (GHVDHGKT) are G1. A GTP-binding site is contributed by 195-202 (GHVDHGKT). Residues 220 to 224 (GITQH) form a G2 region. Positions 241–244 (DTPG) are G3. Residues 241-245 (DTPGH) and 295-298 (NKID) each bind GTP. Residues 295–298 (NKID) are G4. The G5 stretch occupies residues 331–333 (SAK).

This sequence belongs to the TRAFAC class translation factor GTPase superfamily. Classic translation factor GTPase family. IF-2 subfamily.

Its subcellular location is the cytoplasm. Functionally, one of the essential components for the initiation of protein synthesis. Protects formylmethionyl-tRNA from spontaneous hydrolysis and promotes its binding to the 30S ribosomal subunits. Also involved in the hydrolysis of GTP during the formation of the 70S ribosomal complex. The protein is Translation initiation factor IF-2 of Clostridium botulinum (strain Alaska E43 / Type E3).